The chain runs to 218 residues: Probable chemoreceptor glutamine deamidase CheD (218 aa).

The protein belongs to the CheD family.

The catalysed reaction is L-glutaminyl-[protein] + H2O = L-glutamyl-[protein] + NH4(+). In terms of biological role, probably deamidates glutamine residues to glutamate on methyl-accepting chemotaxis receptors (MCPs), playing an important role in chemotaxis. This is Probable chemoreceptor glutamine deamidase CheD from Saccharophagus degradans (strain 2-40 / ATCC 43961 / DSM 17024).